We begin with the raw amino-acid sequence, 503 residues long: E3 ubiquitin-protein ligase IE61 (503 aa).

An RING-type zinc finger spans residues 19-58; sequence CAICMSAISGLGKTLPCLHDFCFVCIQTWTSTSAQCPLCR. Disordered stretches follow at residues 175-194, 367-418, and 445-503; these read AVIT…PSSR, SGPI…LFVD, and AALP…VRRK. The segment covering 375 to 388 has biased composition (polar residues); that stretch reads GGSTSQDTSVSNIH. The span at 389 to 403 shows a compositional bias: low complexity; the sequence is RSPPGGSSTQPSSGR. The span at 404 to 414 shows a compositional bias: basic residues; it reads RPGRPKGVKRR. Residues 471–480 are compositionally biased toward low complexity; it reads PSTSGSSPSP.

As to quaternary structure, interacts with host BTRC; this interaction seems to inactivate SCF-mediated protein degradation in general.

The enzyme catalyses S-ubiquitinyl-[E2 ubiquitin-conjugating enzyme]-L-cysteine + [acceptor protein]-L-lysine = [E2 ubiquitin-conjugating enzyme]-L-cysteine + N(6)-ubiquitinyl-[acceptor protein]-L-lysine.. Its function is as follows. RING-finger E3 ubiquitin ligase that degrades host SP100, one of the major components of ND10 nuclear bodies, thereby disrupting the organization of these bodies. Also plays a role in the inhibition of host NF-kappa-B pathway by blocking the SCF(BTRC)-mediated addition of ubiquitin chains to host IkappaBalpha/NFKBIA, thereby interfering with its degradation. In Cercopithecine herpesvirus 9 (strain DHV) (CeHV-9), this protein is E3 ubiquitin-protein ligase IE61.